The following is a 213-amino-acid chain: MRTSSFLDRLIGEVDSALRTLVLPQKRITTRQSPAENLADTVLSAQEKKHISGLMRVNHAGEVCAQALYQGQALTARLTHIKEQMASAAAEEVDHLAWCEERLYELGSKPSLLNPIWYCGSVLLGALAGLAGDKISLGFVAETERQVTAHLQRHLHYLPEKDKKTIAILKRMQEDEEHHAHTAMEAGAVELPYIIKQLMNAVSKLMTQSSYYI.

Residues E62, E92, H95, E144, E176, and H179 each coordinate Fe cation.

This sequence belongs to the COQ7 family. Fe cation serves as cofactor.

It localises to the cell membrane. It carries out the reaction a 5-methoxy-2-methyl-3-(all-trans-polyprenyl)benzene-1,4-diol + AH2 + O2 = a 3-demethylubiquinol + A + H2O. Its pathway is cofactor biosynthesis; ubiquinone biosynthesis. Its function is as follows. Catalyzes the hydroxylation of 2-nonaprenyl-3-methyl-6-methoxy-1,4-benzoquinol during ubiquinone biosynthesis. In Legionella pneumophila (strain Corby), this protein is 3-demethoxyubiquinol 3-hydroxylase.